Consider the following 176-residue polypeptide: Large ribosomal subunit protein uL10 (176 aa).

The protein belongs to the universal ribosomal protein uL10 family. Part of the ribosomal stalk of the 50S ribosomal subunit. The N-terminus interacts with L11 and the large rRNA to form the base of the stalk. The C-terminus forms an elongated spine to which L12 dimers bind in a sequential fashion forming a multimeric L10(L12)X complex.

Forms part of the ribosomal stalk, playing a central role in the interaction of the ribosome with GTP-bound translation factors. This chain is Large ribosomal subunit protein uL10, found in Hahella chejuensis (strain KCTC 2396).